The chain runs to 479 residues: Catalase A (479 aa).

Residue histidine 63 is part of the active site. Position 346 (tyrosine 346) interacts with heme.

It belongs to the catalase family. Heme is required as a cofactor.

The protein localises to the peroxisome matrix. It catalyses the reaction 2 H2O2 = O2 + 2 H2O. Catalyzes the degradation of hydrogen peroxide (H(2)O(2)) generated by peroxisomal oxidases to water and oxygen, thereby protecting cells from the toxic effects of hydrogen peroxide. In Botryotinia fuckeliana (Noble rot fungus), this protein is Catalase A (catA).